Reading from the N-terminus, the 955-residue chain is Translation initiation factor IF-2 (955 aa).

A disordered region spans residues 49–352; that stretch reads AFSQSSESTE…QAPSFGGVKI (304 aa). Low complexity predominate over residues 77–88; the sequence is PQQQTKASAPSA. Pro residues-rich tracts occupy residues 95 to 121, 149 to 159, 188 to 202, and 209 to 223; these read PAVP…PGPR, RPVPKPGPRPG, RPGP…PPRP, and PPRP…PRPG. The span at 225 to 235 shows a compositional bias: gly residues; it reads GTAGGRPGSSA. Residues 238–264 show a composition bias toward pro residues; the sequence is PPRPVPRPGPRPSPMNMPASRPTPPGG. Over residues 273 to 322 the composition is skewed to gly residues; it reads SGGGRGRGGGGGAGPRGGGAGGGAPRTGFGGRPGGGRGRGGTAGAFGRPG. Positions 326-335 are enriched in basic residues; that stretch reads SRSRKSKKQR. The region spanning 448 to 620 is the tr-type G domain; it reads PRAPVVTVMG…IILTADAELD (173 aa). Positions 457–464 are G1; sequence GHVDHGKT. Position 457 to 464 (457 to 464) interacts with GTP; that stretch reads GHVDHGKT. Positions 482 to 486 are G2; the sequence is GITQH. The G3 stretch occupies residues 507–510; the sequence is DTPG. GTP contacts are provided by residues 507-511 and 561-564; these read DTPGH and NKID. The interval 561–564 is G4; sequence NKID. The interval 597–599 is G5; the sequence is SAK.

The protein belongs to the TRAFAC class translation factor GTPase superfamily. Classic translation factor GTPase family. IF-2 subfamily.

It is found in the cytoplasm. In terms of biological role, one of the essential components for the initiation of protein synthesis. Protects formylmethionyl-tRNA from spontaneous hydrolysis and promotes its binding to the 30S ribosomal subunits. Also involved in the hydrolysis of GTP during the formation of the 70S ribosomal complex. In Thermobifida fusca (strain YX), this protein is Translation initiation factor IF-2.